Here is a 346-residue protein sequence, read N- to C-terminus: Methionine import ATP-binding protein MetN 1 (346 aa).

The ABC transporter domain maps to 2-241 (IELKNVSKVF…PQHVTTKKFV (240 aa)). 38–45 (GYSGAGKS) lines the ATP pocket.

Belongs to the ABC transporter superfamily. Methionine importer (TC 3.A.1.24) family. As to quaternary structure, the complex is composed of two ATP-binding proteins (MetN), two transmembrane proteins (MetI) and a solute-binding protein (MetQ).

It is found in the cell membrane. The enzyme catalyses L-methionine(out) + ATP + H2O = L-methionine(in) + ADP + phosphate + H(+). It carries out the reaction D-methionine(out) + ATP + H2O = D-methionine(in) + ADP + phosphate + H(+). Functionally, part of the ABC transporter complex MetNIQ involved in methionine import. Responsible for energy coupling to the transport system. The chain is Methionine import ATP-binding protein MetN 1 from Bacillus cereus (strain ATCC 10987 / NRS 248).